Here is a 220-residue protein sequence, read N- to C-terminus: MEVALLSFSSSLSPLCHQRISTLTPKTSNSPNYPRLPVIRSAVSRNKKEETVEAVKSHLENCHLLAAINYKGLTVKQFQDLRRTLPDTTKLIVAKNTLVFKAIEGTKWEALKPCMKGMNAWLFVQTDEIPSAIKPYRSFQKERKLENNDFAGAVFEGKFYAPDNFKVLETMPTRAEVYAKMLGALQSPAINLVTTLQAPAREVIMVLMAYIKKLEDESNA.

The N-terminal 41 residues, 1–41 (MEVALLSFSSSLSPLCHQRISTLTPKTSNSPNYPRLPVIRS), are a transit peptide targeting the chloroplast.

The protein belongs to the universal ribosomal protein uL10 family. In terms of assembly, part of the 50S ribosomal subunit.

Its subcellular location is the plastid. It localises to the chloroplast. Functionally, this protein binds directly to 23S ribosomal RNA. The polypeptide is Large ribosomal subunit protein uL10c (RPL10) (Arabidopsis thaliana (Mouse-ear cress)).